The chain runs to 230 residues: Large ribosomal subunit protein uL1 (230 aa).

Belongs to the universal ribosomal protein uL1 family. Part of the 50S ribosomal subunit.

Functionally, binds directly to 23S rRNA. The L1 stalk is quite mobile in the ribosome, and is involved in E site tRNA release. In terms of biological role, protein L1 is also a translational repressor protein, it controls the translation of the L11 operon by binding to its mRNA. The protein is Large ribosomal subunit protein uL1 of Nitrobacter winogradskyi (strain ATCC 25391 / DSM 10237 / CIP 104748 / NCIMB 11846 / Nb-255).